The chain runs to 104 residues: UPF0235 protein MTH_637 (104 aa).

This sequence belongs to the UPF0235 family.

The chain is UPF0235 protein MTH_637 from Methanothermobacter thermautotrophicus (strain ATCC 29096 / DSM 1053 / JCM 10044 / NBRC 100330 / Delta H) (Methanobacterium thermoautotrophicum).